The chain runs to 179 residues: Large ribosomal subunit protein uL6 (179 aa).

This sequence belongs to the universal ribosomal protein uL6 family. As to quaternary structure, part of the 50S ribosomal subunit.

This protein binds to the 23S rRNA, and is important in its secondary structure. It is located near the subunit interface in the base of the L7/L12 stalk, and near the tRNA binding site of the peptidyltransferase center. This Trichlorobacter lovleyi (strain ATCC BAA-1151 / DSM 17278 / SZ) (Geobacter lovleyi) protein is Large ribosomal subunit protein uL6.